The sequence spans 371 residues: Queuine tRNA-ribosyltransferase (371 aa).

The active-site Proton acceptor is the Asp89. Residues 89-93 (DSGGF), Asp143, Gln185, and Gly212 contribute to the substrate site. Residues 243–249 (GVGKPED) are RNA binding. Asp262 functions as the Nucleophile in the catalytic mechanism. The RNA binding; important for wobble base 34 recognition stretch occupies residues 267-271 (TRNAR). Residues Cys300, Cys302, Cys305, and His331 each contribute to the Zn(2+) site.

The protein belongs to the queuine tRNA-ribosyltransferase family. Homodimer. Within each dimer, one monomer is responsible for RNA recognition and catalysis, while the other monomer binds to the replacement base PreQ1. Requires Zn(2+) as cofactor.

It carries out the reaction 7-aminomethyl-7-carbaguanine + guanosine(34) in tRNA = 7-aminomethyl-7-carbaguanosine(34) in tRNA + guanine. It functions in the pathway tRNA modification; tRNA-queuosine biosynthesis. Its function is as follows. Catalyzes the base-exchange of a guanine (G) residue with the queuine precursor 7-aminomethyl-7-deazaguanine (PreQ1) at position 34 (anticodon wobble position) in tRNAs with GU(N) anticodons (tRNA-Asp, -Asn, -His and -Tyr). Catalysis occurs through a double-displacement mechanism. The nucleophile active site attacks the C1' of nucleotide 34 to detach the guanine base from the RNA, forming a covalent enzyme-RNA intermediate. The proton acceptor active site deprotonates the incoming PreQ1, allowing a nucleophilic attack on the C1' of the ribose to form the product. After dissociation, two additional enzymatic reactions on the tRNA convert PreQ1 to queuine (Q), resulting in the hypermodified nucleoside queuosine (7-(((4,5-cis-dihydroxy-2-cyclopenten-1-yl)amino)methyl)-7-deazaguanosine). In Pseudomonas putida (strain ATCC 47054 / DSM 6125 / CFBP 8728 / NCIMB 11950 / KT2440), this protein is Queuine tRNA-ribosyltransferase.